The primary structure comprises 620 residues: Chaperone protein HscA homolog (620 aa).

Belongs to the heat shock protein 70 family.

Chaperone involved in the maturation of iron-sulfur cluster-containing proteins. Has a low intrinsic ATPase activity which is markedly stimulated by HscB. This Pasteurella multocida (strain Pm70) protein is Chaperone protein HscA homolog.